The following is a 236-amino-acid chain: 5'-methylthioadenosine/S-adenosylhomocysteine nucleosidase (236 aa).

E12 functions as the Proton acceptor in the catalytic mechanism. Substrate is bound by residues G78, I153, and 174–175; that span reads ME. D198 functions as the Proton donor in the catalytic mechanism.

The protein belongs to the PNP/UDP phosphorylase family. MtnN subfamily.

It catalyses the reaction S-adenosyl-L-homocysteine + H2O = S-(5-deoxy-D-ribos-5-yl)-L-homocysteine + adenine. The enzyme catalyses S-methyl-5'-thioadenosine + H2O = 5-(methylsulfanyl)-D-ribose + adenine. It carries out the reaction 5'-deoxyadenosine + H2O = 5-deoxy-D-ribose + adenine. It participates in amino-acid biosynthesis; L-methionine biosynthesis via salvage pathway; S-methyl-5-thio-alpha-D-ribose 1-phosphate from S-methyl-5'-thioadenosine (hydrolase route): step 1/2. In terms of biological role, catalyzes the irreversible cleavage of the glycosidic bond in both 5'-methylthioadenosine (MTA) and S-adenosylhomocysteine (SAH/AdoHcy) to adenine and the corresponding thioribose, 5'-methylthioribose and S-ribosylhomocysteine, respectively. Also cleaves 5'-deoxyadenosine, a toxic by-product of radical S-adenosylmethionine (SAM) enzymes, into 5-deoxyribose and adenine. This Shewanella sp. (strain MR-7) protein is 5'-methylthioadenosine/S-adenosylhomocysteine nucleosidase.